Consider the following 365-residue polypeptide: DNA replication and repair protein RecF (365 aa).

An ATP-binding site is contributed by 30-37; the sequence is GDNGEGKT.

Belongs to the RecF family.

The protein resides in the cytoplasm. In terms of biological role, the RecF protein is involved in DNA metabolism; it is required for DNA replication and normal SOS inducibility. RecF binds preferentially to single-stranded, linear DNA. It also seems to bind ATP. The polypeptide is DNA replication and repair protein RecF (Leptospira interrogans serogroup Icterohaemorrhagiae serovar Lai (strain 56601)).